Here is a 286-residue protein sequence, read N- to C-terminus: MRYIRLCIISLLATLPLAVHASPQPLEQIKLSESQLSGRVGMIEMDLASGRTLTAWRADERFPMMSTFKVVLCGAVLARVDAGDEQLERKIHYRQQDLVDYSPVSEKHLADGMTVGELCAAAITMSDNSAANLLLATVGGPAGLTAFLRQIGDNVTRLDRWETELNEALPGDARDTTTPASMAATLRKLLTSQRLSARSQRQLLQWMVDDRVAGPLIRSVLPAGWFIADKTGAGERGARGIVALLGPNNKAERIVVIYLRDTPASMAERNQQIAGIGAALIEHWQR.

The N-terminal stretch at 1–21 (MRYIRLCIISLLATLPLAVHA) is a signal peptide. Serine 66 serves as the catalytic Acyl-ester intermediate. An intrachain disulfide couples cysteine 73 to cysteine 119. Glutamate 164 serves as the catalytic Proton acceptor. 230–232 (KTG) provides a ligand contact to substrate.

It belongs to the class-A beta-lactamase family.

The enzyme catalyses a beta-lactam + H2O = a substituted beta-amino acid. The protein is Beta-lactamase SHV-1 (bla) of Escherichia coli.